Consider the following 744-residue polypeptide: Putative pre-mRNA-splicing factor ATP-dependent RNA helicase DHX32 (744 aa).

Met-1 bears the N-acetylmethionine mark. A disordered region spans residues 1–28 (MDEEELDHPNASPEKRYFPESLDSSDGD). In terms of domain architecture, Helicase ATP-binding spans 72–270 (MESLLQNQVV…RLIFEIHRSG (199 aa)). 85–92 (GDSKCGKS) provides a ligand contact to ATP. The DEAH box motif lies at 185–188 (DDVH). One can recognise a Helicase C-terminal domain in the interval 258-438 (SVIRLIFEIH…SMVLFMKRVD (181 aa)).

Belongs to the DEAD box helicase family. DEAH subfamily.

Its subcellular location is the nucleus. It localises to the mitochondrion. The catalysed reaction is ATP + H2O = ADP + phosphate + H(+). This Mus musculus (Mouse) protein is Putative pre-mRNA-splicing factor ATP-dependent RNA helicase DHX32 (Dhx32).